We begin with the raw amino-acid sequence, 151 residues long: 3-dehydroquinate dehydratase (151 aa).

Tyr24 serves as the catalytic Proton acceptor. Residues Asn76, His82, and Asp89 each contribute to the substrate site. The active-site Proton donor is the His102. Substrate contacts are provided by residues 103-104 (VS) and Arg113.

The protein belongs to the type-II 3-dehydroquinase family. Homododecamer.

The catalysed reaction is 3-dehydroquinate = 3-dehydroshikimate + H2O. Its pathway is metabolic intermediate biosynthesis; chorismate biosynthesis; chorismate from D-erythrose 4-phosphate and phosphoenolpyruvate: step 3/7. Its function is as follows. Catalyzes a trans-dehydration via an enolate intermediate. The chain is 3-dehydroquinate dehydratase from Rhodopseudomonas palustris (strain TIE-1).